Here is a 471-residue protein sequence, read N- to C-terminus: Plasmepsin VII (471 aa).

The first 24 residues, 1-24, serve as a signal peptide directing secretion; that stretch reads MKSVYHHFAIIFFLKLFLCNCILS. Positions 96-438 constitute a Peptidase A1 domain; sequence YYGKIAIGEN…DKDNLQIGFV (343 aa). Active-site residues include aspartate 115 and aspartate 325.

Belongs to the peptidase A1 family.

The protein resides in the cytoplasm. This Plasmodium berghei (strain Anka) protein is Plasmepsin VII.